The sequence spans 637 residues: Chaperone protein HtpG (637 aa).

Positions 1 to 345 (MSQQETHGFQ…SNDLPLNVSR (345 aa)) are a; substrate-binding. The interval 346-562 (EILQDNHITK…EGEMSTQMIK (217 aa)) is b. Residues 563-637 (LMQAAGQPVP…MNQMLLANMK (75 aa)) are c.

This sequence belongs to the heat shock protein 90 family. In terms of assembly, homodimer.

The protein localises to the cytoplasm. Its function is as follows. Molecular chaperone. Has ATPase activity. In Shewanella putrefaciens (strain CN-32 / ATCC BAA-453), this protein is Chaperone protein HtpG.